The chain runs to 28 residues: Dermaseptin-SP1 (28 aa).

As to expression, expressed by the skin glands.

Its subcellular location is the secreted. Probable antimicrobial peptide which stimulates insulin-release in glucose-responsive BRIN-BD 11 cells. The protein is Dermaseptin-SP1 of Agalychnis spurrelli (Gliding leaf frog).